We begin with the raw amino-acid sequence, 736 residues long: Probable beta-glucosidase L (736 aa).

An N-terminal signal peptide occupies residues 1-21 (MNYRVPSLKATALAMAALTQA). N-linked (GlcNAc...) asparagine glycosylation occurs at Asn-224. The active site involves Asp-252. 4 N-linked (GlcNAc...) asparagine glycosylation sites follow: Asn-295, Asn-363, Asn-429, and Asn-607.

This sequence belongs to the glycosyl hydrolase 3 family.

The protein resides in the secreted. The catalysed reaction is Hydrolysis of terminal, non-reducing beta-D-glucosyl residues with release of beta-D-glucose.. It functions in the pathway glycan metabolism; cellulose degradation. Its function is as follows. Beta-glucosidases are one of a number of cellulolytic enzymes involved in the degradation of cellulosic biomass. Catalyzes the last step releasing glucose from the inhibitory cellobiose. This Aspergillus terreus (strain NIH 2624 / FGSC A1156) protein is Probable beta-glucosidase L (bglL).